The chain runs to 468 residues: Neuronal acetylcholine receptor subunit alpha-5 (468 aa).

Residues Met1–Gly22 form the signal peptide. The Extracellular segment spans residues Arg23–Thr254. N-linked (GlcNAc...) asparagine glycosylation is found at Asn155, Asn183, and Asn229. Cysteines 170 and 184 form a disulfide. The cysteines at positions 234 and 235 are disulfide-linked. Helical transmembrane passes span Leu255–Pro275, Ile282–Ile302, and Leu317–Ile337. Residues His338–Arg429 are Cytoplasmic-facing. A helical membrane pass occupies residues Met430–Ile451. Residues Tyr452–Lys468 lie on the Extracellular side of the membrane.

The protein belongs to the ligand-gated ion channel (TC 1.A.9) family. Acetylcholine receptor (TC 1.A.9.1) subfamily. Alpha-5/CHRNA5 sub-subfamily. In terms of assembly, neuronal AChR that forms heteropentamers composed of two different type of subunits: alpha and non-alpha (beta). CHRNA5/alpha-5 subunit is only able to form functional nAChRs when co-assembled with another alpha subunit, can be combined to CHRNA4/alpha-4 or CHRNA3/alpha-3 and CHRNB4/beta-4 or CHRNB2/beta-2 to give rise to functional receptors. Interacts with LYPD6.

It is found in the synaptic cell membrane. The protein localises to the cell membrane. The enzyme catalyses Ca(2+)(in) = Ca(2+)(out). It catalyses the reaction K(+)(in) = K(+)(out). It carries out the reaction Na(+)(in) = Na(+)(out). Its activity is regulated as follows. Activated by a myriad of ligands such as acetylcholine, cytisine, nicotine, choline and epibatidine. Functionally, component of neuronal acetylcholine receptors (nAChRs) that function as pentameric, ligand-gated cation channels with high calcium permeability among other activities. nAChRs are excitatory neurotrasnmitter receptors formed by a collection of nAChR subunits known to mediate synaptic transmission in the nervous system and the neuromuscular junction. Each nAchR subunit confers differential attributes to channel properties, including activation, deactivation and desensitization kinetics, pH sensitivity, cation permeability, and binding to allosteric modulators. Has an accessory rather than functional role and is only able to form functional nAChRs when co-assembled with another beta subunit. Participates in pentameric assemblies along with CHRNA3, CHRNA4, CHRNB2 and CHRNB4. Increases receptor sensitivity to acetylcholine and nicotine when associated with CHRNA4 and CHRNB2. Plays a role in nicotine addiction. This chain is Neuronal acetylcholine receptor subunit alpha-5 (CHRNA5), found in Pan troglodytes (Chimpanzee).